Consider the following 91-residue polypeptide: Small ribosomal subunit protein bS16 (91 aa).

The protein belongs to the bacterial ribosomal protein bS16 family.

The protein is Small ribosomal subunit protein bS16 of Ligilactobacillus salivarius (strain UCC118) (Lactobacillus salivarius).